Here is a 210-residue protein sequence, read N- to C-terminus: Glutathione S-transferase P (210 aa).

The 80-residue stretch at proline 2–glycine 81 folds into the GST N-terminal domain. The residue at position 4 (tyrosine 4) is a Phosphotyrosine; by EGFR. Glutathione-binding positions include tyrosine 8, arginine 14, tryptophan 39, lysine 45, and glutamine 52–leucine 53. Threonine 62 carries the post-translational modification Phosphothreonine. Glutamine 65–serine 66 serves as a coordination point for glutathione. The region spanning aspartate 83–isoleucine 204 is the GST C-terminal domain. N6-succinyllysine is present on residues lysine 103 and lysine 116. Position 128 is an N6-acetyllysine (lysine 128).

Belongs to the GST superfamily. Pi family. Homodimer. Interacts with CDK5. As to expression, present in kidney, lung, testis and placenta, very low levels in liver.

It is found in the cytoplasm. It localises to the mitochondrion. Its subcellular location is the nucleus. The enzyme catalyses RX + glutathione = an S-substituted glutathione + a halide anion + H(+). It carries out the reaction prostaglandin J2 + glutathione = prostaglandin J2-S-(R)-glutathione. It catalyses the reaction prostaglandin J2 + glutathione = prostaglandin J2-S-(S)-glutathione. The catalysed reaction is prostaglandin A2 + glutathione = prostaglandin A2-S-(S)-glutathione. The enzyme catalyses 11(S)-hydroxy-14(S),15(S)-epoxy-(5Z,8Z,12E)-eicosatrienoate + glutathione = (11S,15S)-dihydroxy-14(R)-S-glutathionyl-(5Z,8Z,12E)-eicosatrienoate. Its function is as follows. Conjugation of reduced glutathione to a wide number of exogenous and endogenous hydrophobic electrophiles. Involved in the formation of glutathione conjugates of both prostaglandin A2 (PGA2) and prostaglandin J2 (PGJ2). Participates in the formation of novel hepoxilin regioisomers. Negatively regulates CDK5 activity via p25/p35 translocation to prevent neurodegeneration. The protein is Glutathione S-transferase P of Rattus norvegicus (Rat).